Consider the following 346-residue polypeptide: MNKKRVLTGDRPTGKLHLGHWIGSIMNRLQLQNDPRYDCFFIIADLHTLTTKTRKEEVLHIDSHIYDVLADWLSVGIDPEKSAIYLQSAIPEIYELNLLFSMLTPLNHIMGIPSIKEMARNASINEESLSHGLIGYPVLQSADILLAKAHLVPVGKDNEAHVELTRDIAKTFNRLYGSVFPEPDILQGELTSLVGTNGQGKMSKSANNAIYLSDDEKTVQEKIRKMYTDPNRVHATTPGRVEGNPLFIYHDLFNPHKEEVEEFKTRYRQGCIKDVEVKARLAEEINLFLNPFREKRSEFVAQPKILEEALQKGTEKMRSVARETMEEVHNNLGLSRKWRSILASSK.

ATP-binding positions include 11–13 (RPT) and 19–20 (GH). Residues 12-20 (PTGKLHLGH) carry the 'HIGH' region motif. Asp-143 serves as a coordination point for L-tryptophan. ATP contacts are provided by residues 155-157 (GKD), Leu-193, and 201-205 (KMSKS). The 'KMSKS' region signature appears at 201–205 (KMSKS).

Belongs to the class-I aminoacyl-tRNA synthetase family. Homodimer.

It localises to the cytoplasm. It catalyses the reaction tRNA(Trp) + L-tryptophan + ATP = L-tryptophyl-tRNA(Trp) + AMP + diphosphate + H(+). In terms of biological role, catalyzes the attachment of tryptophan to tRNA(Trp). The chain is Tryptophan--tRNA ligase from Chlamydia muridarum (strain MoPn / Nigg).